Here is a 163-residue protein sequence, read N- to C-terminus: NADH-quinone oxidoreductase subunit I (163 aa).

2 consecutive 4Fe-4S ferredoxin-type domains span residues 53–83 and 94–123; these read LRRY…IEAG and TLYE…ETRE. Positions 63, 66, 69, 73, 103, 106, 109, and 113 each coordinate [4Fe-4S] cluster.

It belongs to the complex I 23 kDa subunit family. As to quaternary structure, NDH-1 is composed of 14 different subunits. Subunits NuoA, H, J, K, L, M, N constitute the membrane sector of the complex. [4Fe-4S] cluster is required as a cofactor.

It is found in the cell inner membrane. The enzyme catalyses a quinone + NADH + 5 H(+)(in) = a quinol + NAD(+) + 4 H(+)(out). Functionally, NDH-1 shuttles electrons from NADH, via FMN and iron-sulfur (Fe-S) centers, to quinones in the respiratory chain. The immediate electron acceptor for the enzyme in this species is believed to be ubiquinone. Couples the redox reaction to proton translocation (for every two electrons transferred, four hydrogen ions are translocated across the cytoplasmic membrane), and thus conserves the redox energy in a proton gradient. The sequence is that of NADH-quinone oxidoreductase subunit I from Alkalilimnicola ehrlichii (strain ATCC BAA-1101 / DSM 17681 / MLHE-1).